The following is a 299-amino-acid chain: Ribonuclease H2 subunit A (299 aa).

Residue methionine 1 is modified to N-acetylmethionine. One can recognise an RNase H type-2 domain in the interval 28–251; it reads PCVLGVDEAG…AQSILESEAE (224 aa). 3 residues coordinate a divalent metal cation: aspartate 34, glutamate 35, and aspartate 142. 2 positions are modified to phosphothreonine: threonine 205 and threonine 217. Positions 250 to 272 are disordered; the sequence is AEDVKWEDSETGDPKGPGKIKSY. Serine 258 carries the post-translational modification Phosphoserine.

The protein belongs to the RNase HII family. Eukaryotic subfamily. As to quaternary structure, the RNase H2 complex is a heterotrimer composed of the catalytic subunit RNASEH2A and the non-catalytic subunits RNASEH2B and RNASEH2C. The cofactor is Mn(2+). Requires Mg(2+) as cofactor.

Its subcellular location is the nucleus. It carries out the reaction Endonucleolytic cleavage to 5'-phosphomonoester.. Functionally, catalytic subunit of RNase HII, an endonuclease that specifically degrades the RNA of RNA:DNA hybrids. Participates in DNA replication, possibly by mediating the removal of lagging-strand Okazaki fragment RNA primers during DNA replication. Mediates the excision of single ribonucleotides from DNA:RNA duplexes. The sequence is that of Ribonuclease H2 subunit A (RNASEH2A) from Bos taurus (Bovine).